Here is a 292-residue protein sequence, read N- to C-terminus: Peroxisomal 2,4-dienoyl-CoA reductase SPS19 [(3E)-enoyl-CoA-producing] (292 aa).

NADP(+)-binding residues include Ile36, Asp85, and Lys145. Residue Ser162 is the Proton donor of the active site. Lys180 serves as a coordination point for NADP(+). Lys180 (lowers pKa of active site Tyr) is an active-site residue. Residue Lys188 forms a Glycyl lysine isopeptide (Lys-Gly) (interchain with G-Cter in ubiquitin) linkage. Position 209 (Ile209) interacts with NADP(+). A Microbody targeting signal motif is present at residues Ser290–Leu292.

This sequence belongs to the short-chain dehydrogenases/reductases (SDR) family. In terms of assembly, homodimer.

It localises to the peroxisome. The catalysed reaction is a (2E,4Z)-dienoyl-CoA + NADPH + H(+) = a 4,5-saturated-(3E)-enoyl-CoA + NADP(+). It catalyses the reaction a (2E,4E)-dienoyl-CoA + NADPH + H(+) = a 4,5-saturated-(3E)-enoyl-CoA + NADP(+). Functionally, auxiliary enzyme of beta-oxidation. Participates in the degradation of unsaturated fatty enoyl-CoA esters having double bonds in both even- and odd-numbered positions in peroxisome. Catalyzes the NADP-dependent reduction of 2,4-dienoyl-CoA to yield trans-3-enoyl-CoA. Dispensable for growth and sporulation on solid acetate and oleate media, but is essential for these processes to occur on petroselineate. The sequence is that of Peroxisomal 2,4-dienoyl-CoA reductase SPS19 [(3E)-enoyl-CoA-producing] (SPS19) from Saccharomyces cerevisiae (strain ATCC 204508 / S288c) (Baker's yeast).